The chain runs to 124 residues: Urease subunit beta (124 aa).

Belongs to the urease beta subunit family. Heterotrimer of UreA (gamma), UreB (beta) and UreC (alpha) subunits. Three heterotrimers associate to form the active enzyme.

Its subcellular location is the cytoplasm. It carries out the reaction urea + 2 H2O + H(+) = hydrogencarbonate + 2 NH4(+). It participates in nitrogen metabolism; urea degradation; CO(2) and NH(3) from urea (urease route): step 1/1. The sequence is that of Urease subunit beta from Bacillus subtilis (strain 168).